Consider the following 378-residue polypeptide: Probable endopolygalacturonase NFIA_008150 (378 aa).

The N-terminal stretch at 1–19 (MLKLIGSLVLLASAAEVIA) is a signal peptide. A propeptide spanning residues 20–35 (SPLAESVAPSITLEKR) is cleaved from the precursor. C38 and C56 are joined by a disulfide. 3 PbH1 repeats span residues 147–169 (TSSS…SING), 170–200 (CDGL…DIGS), and 201–222 (SSNI…AVNS). The active-site Proton donor is the D215. C217 and C233 are disulfide-bonded. H237 is an active-site residue. 2 PbH1 repeats span residues 247 to 273 (RSDN…RIKA) and 281 to 303 (IKGI…LIEQ). An N-linked (GlcNAc...) asparagine glycan is attached at N254. The N-linked (GlcNAc...) asparagine glycan is linked to N327. 2 cysteine pairs are disulfide-bonded: C345-C350 and C369-C378.

It belongs to the glycosyl hydrolase 28 family.

The protein localises to the secreted. It catalyses the reaction (1,4-alpha-D-galacturonosyl)n+m + H2O = (1,4-alpha-D-galacturonosyl)n + (1,4-alpha-D-galacturonosyl)m.. Its function is as follows. Involved in maceration and soft-rotting of plant tissue. Hydrolyzes the 1,4-alpha glycosidic bonds of de-esterified pectate in the smooth region of the plant cell wall. This Neosartorya fischeri (strain ATCC 1020 / DSM 3700 / CBS 544.65 / FGSC A1164 / JCM 1740 / NRRL 181 / WB 181) (Aspergillus fischerianus) protein is Probable endopolygalacturonase NFIA_008150.